The sequence spans 280 residues: Inhibitor of growth protein 2 (280 aa).

A coiled-coil region spans residues 48–120 (VLRELDNKYQ…VENRARQMEL (73 aa)). Residues 122 to 204 (SQCFQDPAES…KQEREASPVE (83 aa)) are disordered. Positions 130 to 140 (ESERASDKAKM) are enriched in basic and acidic residues. A compositionally biased stretch (basic residues) spans 181–193 (KKSKSAKKKKRSK). Residue Lys195 forms a Glycyl lysine isopeptide (Lys-Gly) (interchain with G-Cter in SUMO1) linkage. The segment at 212–261 (PTYCLCNQVSYGEMIGCDNEQCPIEWFHFSCVSLTYKPKGKWYCPKCRGD) adopts a PHD-type zinc-finger fold. 8 residues coordinate Zn(2+): Cys215, Cys217, Cys228, Cys233, His239, Cys242, Cys255, and Cys258. Over residues 258–274 (CRGDNEKTMDKSTEKTK) the composition is skewed to basic and acidic residues. The interval 258–280 (CRGDNEKTMDKSTEKTKKDRRSR) is disordered. The segment at 264-280 (KTMDKSTEKTKKDRRSR) is PBR.

Belongs to the ING family. In terms of assembly, interacts with H3K4me3 and to a lesser extent with H3K4me2. Component of a mSin3A-like complex at least consisting of SIN3A, HDAC1, HDAC2, RBBP4/RbAp48, RBBP7/RbAp46, SAP30 and ING2. Sumoylation enhances its association with SIN3A and is required for binding to some target gene promoters, this is the case for TMEM71. Widely expressed. Higher expressed in colon-cancer tumor than in normal colon tissues.

The protein localises to the nucleus. Seems to be involved in p53/TP53 activation and p53/TP53-dependent apoptotic pathways, probably by enhancing acetylation of p53/TP53. Component of a mSin3A-like corepressor complex, which is probably involved in deacetylation of nucleosomal histones. ING2 activity seems to be modulated by binding to phosphoinositides (PtdInsPs). The protein is Inhibitor of growth protein 2 (ING2) of Homo sapiens (Human).